Here is a 187-residue protein sequence, read N- to C-terminus: Large ribosomal subunit protein uL13 (187 aa).

Belongs to the universal ribosomal protein uL13 family.

The chain is Large ribosomal subunit protein uL13 (rpl13a) from Dictyostelium discoideum (Social amoeba).